A 211-amino-acid polypeptide reads, in one-letter code: N-(5'-phosphoribosyl)anthranilate isomerase (211 aa).

It belongs to the TrpF family.

The catalysed reaction is N-(5-phospho-beta-D-ribosyl)anthranilate = 1-(2-carboxyphenylamino)-1-deoxy-D-ribulose 5-phosphate. It participates in amino-acid biosynthesis; L-tryptophan biosynthesis; L-tryptophan from chorismate: step 3/5. This Zymomonas mobilis subsp. pomaceae (strain ATCC 29192 / DSM 22645 / JCM 10191 / CCUG 17912 / NBRC 13757 / NCIMB 11200 / NRRL B-4491 / Barker I) protein is N-(5'-phosphoribosyl)anthranilate isomerase.